Here is a 453-residue protein sequence, read N- to C-terminus: Divalent metal cation transporter MntH (453 aa).

11 helical membrane-spanning segments follow: residues 39 to 59 (LAFL…GNWI), 66 to 86 (AQYG…AMLL), 114 to 134 (AIMF…AEVI), 146 to 166 (IPLI…LFIM), 175 to 195 (AIVG…VYIS), 217 to 237 (GILY…NLYL), 270 to 290 (LSIA…LFFG), 310 to 330 (PALG…ALLA), 362 to 382 (LITR…FKGN), 388 to 408 (QLLV…LIPL), and 427 to 447 (INII…YLII).

It belongs to the NRAMP family.

The protein localises to the cell membrane. Functionally, h(+)-stimulated, divalent metal cation uptake system. The polypeptide is Divalent metal cation transporter MntH (Staphylococcus epidermidis (strain ATCC 12228 / FDA PCI 1200)).